A 507-amino-acid chain; its full sequence is Maturase K (507 aa).

The protein belongs to the intron maturase 2 family. MatK subfamily.

The protein resides in the plastid. It localises to the chloroplast. Its function is as follows. Usually encoded in the trnK tRNA gene intron. Probably assists in splicing its own and other chloroplast group II introns. The sequence is that of Maturase K from Ranunculus acris (Meadow buttercup).